The chain runs to 162 residues: Ribosomal RNA large subunit methyltransferase H (162 aa).

Residues leucine 78 and glycine 110 each coordinate S-adenosyl-L-methionine.

This sequence belongs to the RNA methyltransferase RlmH family. Homodimer.

It localises to the cytoplasm. It carries out the reaction pseudouridine(1915) in 23S rRNA + S-adenosyl-L-methionine = N(3)-methylpseudouridine(1915) in 23S rRNA + S-adenosyl-L-homocysteine + H(+). In terms of biological role, specifically methylates the pseudouridine at position 1915 (m3Psi1915) in 23S rRNA. In Bradyrhizobium sp. (strain ORS 278), this protein is Ribosomal RNA large subunit methyltransferase H.